A 216-amino-acid polypeptide reads, in one-letter code: 3-isopropylmalate dehydratase small subunit (216 aa).

It belongs to the LeuD family. LeuD type 1 subfamily. As to quaternary structure, heterodimer of LeuC and LeuD.

The enzyme catalyses (2R,3S)-3-isopropylmalate = (2S)-2-isopropylmalate. It functions in the pathway amino-acid biosynthesis; L-leucine biosynthesis; L-leucine from 3-methyl-2-oxobutanoate: step 2/4. In terms of biological role, catalyzes the isomerization between 2-isopropylmalate and 3-isopropylmalate, via the formation of 2-isopropylmaleate. The sequence is that of 3-isopropylmalate dehydratase small subunit from Polaromonas sp. (strain JS666 / ATCC BAA-500).